Consider the following 433-residue polypeptide: Trigger factor (433 aa).

In terms of domain architecture, PPIase FKBP-type spans 161 to 246 (EDRVVIDFVG…LKKVENIVLP (86 aa)).

The protein belongs to the FKBP-type PPIase family. Tig subfamily.

It is found in the cytoplasm. The enzyme catalyses [protein]-peptidylproline (omega=180) = [protein]-peptidylproline (omega=0). In terms of biological role, involved in protein export. Acts as a chaperone by maintaining the newly synthesized protein in an open conformation. Functions as a peptidyl-prolyl cis-trans isomerase. The sequence is that of Trigger factor from Actinobacillus pleuropneumoniae serotype 5b (strain L20).